The primary structure comprises 559 residues: Transcription factor tstO (559 aa).

Positions 23–50 form a DNA-binding region, zn(2)-C6 fungal-type; it reads CDACQSAKVRCGREKPTCRRCQNQGKTC. Disordered regions lie at residues 166–316 and 453–477; these read GPST…TGFS and ASPPPSIFDNNNTSTTTTTSSISTA. Residues 222–232 are compositionally biased toward low complexity; the sequence is SSESLSLEPSS. Over residues 255 to 267 the composition is skewed to polar residues; the sequence is TRGSQKISPNPHS. Residues 268–279 show a composition bias toward basic and acidic residues; sequence IDSRTSSRDKSF. Low complexity-rich tracts occupy residues 286 to 316 and 462 to 477; these read STLGSRTPNTTTTSSSASSVGLTGSSTTGFS and NNNTSTTTTTSSISTA.

It localises to the nucleus. Functionally, transcription factore; part of the gene cluster that mediates the biosynthesis of the antihypercholesterolemic agents phomoidrides which are dimeric anhydrides. Probably regulates the expression of the genes from the cluster. This chain is Transcription factor tstO, found in Talaromyces stipitatus (strain ATCC 10500 / CBS 375.48 / QM 6759 / NRRL 1006) (Penicillium stipitatum).